The chain runs to 211 residues: Claudin-7 (211 aa).

At 1-7 (MANSGLQ) the chain is on the cytoplasmic side. Residues 8-28 (LLGFSMAMLGWVGLIASTAIP) form a helical membrane-spanning segment. At 29-81 (QWQMSSYAGDNIITAQAMYKGLWMECVTQSTGMMSCKMYDSVLALPGALQATR) the chain is on the extracellular side. Residues 82–102 (ALMVVSLVLGFLAMFVATMGM) traverse the membrane as a helical segment. The Cytoplasmic segment spans residues 103–119 (KCTRCGGDDKAKKARIA). The chain crosses the membrane as a helical span at residues 120 to 140 (MTGGIVFIVAGLAALVACSWI). Residues 141 to 160 (GHQIVTDFYNPLTPMNVKYE) lie on the Extracellular side of the membrane. A helical transmembrane segment spans residues 161-181 (FGPAIFIGWAGSALVLLGGAL). Residues 182–211 (LSCSCPGSESKAAYRAPRSYPKSNSSKEYV) lie on the Cytoplasmic side of the membrane. Positions 210–211 (YV) are interactions with TJP1, TJP2 and TJP3.

The protein belongs to the claudin family. In terms of assembly, directly interacts with TJP1/ZO-1, TJP2/ZO-2 and TJP3/ZO-3. The phosphorylated form interacts with EPCAM. Post-translationally, phosphorylated. In terms of tissue distribution, expressed predominantly in lung and kidney.

Its subcellular location is the cell membrane. The protein resides in the basolateral cell membrane. The protein localises to the cell junction. It localises to the tight junction. Plays a major role in tight junction-specific obliteration of the intercellular space, through calcium-independent cell-adhesion activity. In Mus musculus (Mouse), this protein is Claudin-7 (Cldn7).